The primary structure comprises 337 residues: Outer membrane protein U (337 aa).

Residues 1–21 form the signal peptide; the sequence is MKKTLIALSVSAAAMATGVNA.

It belongs to the Gram-negative porin family. As to quaternary structure, homotrimer.

The protein localises to the cell outer membrane. In terms of biological role, forms pores that allow passive diffusion of small molecules across the outer membrane. The protein is Outer membrane protein U (ompU) of Vibrio parahaemolyticus serotype O3:K6 (strain RIMD 2210633).